We begin with the raw amino-acid sequence, 240 residues long: ATP-dependent dethiobiotin synthetase BioD (240 aa).

13 to 18 (EVGKTV) lines the ATP pocket. Thr17 contacts Mg(2+). Residue Lys38 is part of the active site. Residue Ser42 coordinates substrate. ATP-binding positions include Asp55, 116–119 (EGAG), 176–177 (ND), and 205–207 (PWL). The Mg(2+) site is built by Asp55 and Glu116.

It belongs to the dethiobiotin synthetase family. In terms of assembly, homodimer. It depends on Mg(2+) as a cofactor.

Its subcellular location is the cytoplasm. The enzyme catalyses (7R,8S)-7,8-diammoniononanoate + CO2 + ATP = (4R,5S)-dethiobiotin + ADP + phosphate + 3 H(+). It functions in the pathway cofactor biosynthesis; biotin biosynthesis; biotin from 7,8-diaminononanoate: step 1/2. In terms of biological role, catalyzes a mechanistically unusual reaction, the ATP-dependent insertion of CO2 between the N7 and N8 nitrogen atoms of 7,8-diaminopelargonic acid (DAPA, also called 7,8-diammoniononanoate) to form a ureido ring. The chain is ATP-dependent dethiobiotin synthetase BioD from Pseudescherichia vulneris (Escherichia vulneris).